A 967-amino-acid polypeptide reads, in one-letter code: Phosphoenolpyruvate carboxylase (967 aa).

Ser-11 is subject to Phosphoserine. Catalysis depends on residues His-172 and Lys-601.

This sequence belongs to the PEPCase type 1 family. As to quaternary structure, homotetramer. Mg(2+) is required as a cofactor.

It localises to the cytoplasm. The enzyme catalyses oxaloacetate + phosphate = phosphoenolpyruvate + hydrogencarbonate. Its pathway is photosynthesis; C3 acid pathway. With respect to regulation, by light-reversible phosphorylation. Functionally, through the carboxylation of phosphoenolpyruvate (PEP) it forms oxaloacetate, a four-carbon dicarboxylic acid source for the tricarboxylic acid cycle. This is Phosphoenolpyruvate carboxylase (PPCA1) from Flaveria pringlei.